Reading from the N-terminus, the 137-residue chain is MMRSYEELLERAFEKLADKDVVRRERFEIPRVSIQREGARTILKNFSQIAKTLNRSEDHLYKYIVKSLGTAGFIDNGRLVLQGKFTESELQKEVDDYVRLYVLCRECNSPDTEFIKEERVLMLRCLACGAKHPVRNI.

This sequence belongs to the eIF-2-beta/eIF-5 family. Heterotrimer composed of an alpha, a beta and a gamma chain.

Its function is as follows. eIF-2 functions in the early steps of protein synthesis by forming a ternary complex with GTP and initiator tRNA. This Archaeoglobus fulgidus (strain ATCC 49558 / DSM 4304 / JCM 9628 / NBRC 100126 / VC-16) protein is Translation initiation factor 2 subunit beta (eif2b).